We begin with the raw amino-acid sequence, 79 residues long: Acyl carrier protein (79 aa).

The 76-residue stretch at 2-77 (SDIADKVKKI…DAIDYIEKQK (76 aa)) folds into the Carrier domain. Serine 37 carries the post-translational modification O-(pantetheine 4'-phosphoryl)serine.

The protein belongs to the acyl carrier protein (ACP) family. In terms of processing, 4'-phosphopantetheine is transferred from CoA to a specific serine of apo-ACP by AcpS. This modification is essential for activity because fatty acids are bound in thioester linkage to the sulfhydryl of the prosthetic group.

Its subcellular location is the cytoplasm. It participates in lipid metabolism; fatty acid biosynthesis. In terms of biological role, carrier of the growing fatty acid chain in fatty acid biosynthesis. This is Acyl carrier protein from Gluconobacter oxydans (strain 621H) (Gluconobacter suboxydans).